The sequence spans 149 residues: Low molecular weight protein-tyrosine-phosphatase Wzb (149 aa).

Cys9 serves as the catalytic Nucleophile. The active site involves Arg15. Asp115 (proton donor) is an active-site residue.

Belongs to the low molecular weight phosphotyrosine protein phosphatase family.

The enzyme catalyses O-phospho-L-tyrosyl-[protein] + H2O = L-tyrosyl-[protein] + phosphate. It functions in the pathway glycan metabolism; exopolysaccharide biosynthesis. In terms of biological role, dephosphorylates Wzc. Required for the extracellular polysaccharide colanic acid synthesis. Probably involved in the export of colanic acid from the cell to medium. Involved in protection of cells against contact-dependent growth inhibition (CDI). The chain is Low molecular weight protein-tyrosine-phosphatase Wzb (wzb) from Salmonella typhimurium (strain LT2 / SGSC1412 / ATCC 700720).